The following is a 518-amino-acid chain: Probable thiamine biosynthetic bifunctional enzyme (518 aa).

Residues 1-229 (MKRQIDYSLY…ATPPCFAQAR (229 aa)) form a thiamine-phosphate synthase region. 4-amino-2-methyl-5-(diphosphooxymethyl)pyrimidine contacts are provided by residues 40–44 (QHREK) and Asn-72. Mg(2+) contacts are provided by Asp-73 and Asp-92. Ser-111 is a binding site for 4-amino-2-methyl-5-(diphosphooxymethyl)pyrimidine. 137–139 (TNT) is a 2-[(2R,5Z)-2-carboxy-4-methylthiazol-5(2H)-ylidene]ethyl phosphate binding site. Position 140 (Lys-140) interacts with 4-amino-2-methyl-5-(diphosphooxymethyl)pyrimidine. 2-[(2R,5Z)-2-carboxy-4-methylthiazol-5(2H)-ylidene]ethyl phosphate-binding positions include Gly-173 and 199 to 200 (VS). The segment at 230–518 (SSLTTPKDLL…IERAKLEKAE (289 aa)) is hydroxyethylthiazole kinase. Met-281 serves as a coordination point for 5-(2-hydroxyethyl)-4-methylthiazole. ATP-binding residues include Lys-355 and Ser-403. Ala-430 is a binding site for 5-(2-hydroxyethyl)-4-methylthiazole. The active-site Proton acceptor; for hydroxyethylthiazole kinase activity is Cys-433.

It in the N-terminal section; belongs to the thiamine-phosphate synthase family. This sequence in the C-terminal section; belongs to the Thz kinase family. It depends on Mg(2+) as a cofactor.

The catalysed reaction is 2-[(2R,5Z)-2-carboxy-4-methylthiazol-5(2H)-ylidene]ethyl phosphate + 4-amino-2-methyl-5-(diphosphooxymethyl)pyrimidine + 2 H(+) = thiamine phosphate + CO2 + diphosphate. It carries out the reaction 2-(2-carboxy-4-methylthiazol-5-yl)ethyl phosphate + 4-amino-2-methyl-5-(diphosphooxymethyl)pyrimidine + 2 H(+) = thiamine phosphate + CO2 + diphosphate. The enzyme catalyses 4-methyl-5-(2-phosphooxyethyl)-thiazole + 4-amino-2-methyl-5-(diphosphooxymethyl)pyrimidine + H(+) = thiamine phosphate + diphosphate. It catalyses the reaction 5-(2-hydroxyethyl)-4-methylthiazole + ATP = 4-methyl-5-(2-phosphooxyethyl)-thiazole + ADP + H(+). It participates in cofactor biosynthesis; thiamine diphosphate biosynthesis; 4-methyl-5-(2-phosphoethyl)-thiazole from 5-(2-hydroxyethyl)-4-methylthiazole: step 1/1. It functions in the pathway cofactor biosynthesis; thiamine diphosphate biosynthesis; thiamine phosphate from 4-amino-2-methyl-5-diphosphomethylpyrimidine and 4-methyl-5-(2-phosphoethyl)-thiazole: step 1/1. In terms of biological role, condenses 4-methyl-5-(beta-hydroxyethyl)thiazole monophosphate (THZ-P) and 2-methyl-4-amino-5-hydroxymethyl pyrimidine pyrophosphate (HMP-PP) to form thiamine monophosphate (TMP). The polypeptide is Probable thiamine biosynthetic bifunctional enzyme (thi4) (Schizosaccharomyces pombe (strain 972 / ATCC 24843) (Fission yeast)).